The sequence spans 119 residues: Anther-specific protein BCP1 (119 aa).

The signal sequence occupies residues 1–23; that stretch reads MGRQNVVVVFGLVFLAVLGLAAA. Low complexity predominate over residues 24–42; the sequence is ASSPSPSASPSKAPSTSTP. The disordered stretch occupies residues 24 to 95; that stretch reads ASSPSPSASP…PSGSADSADS (72 aa). Over 24-98 the chain is Extracellular; it reads ASSPSPSASP…SADSADSGAA (75 aa). Acidic residues predominate over residues 56-69; the sequence is TDDDAAASPGDDDV. Over residues 82–95 the composition is skewed to low complexity; it reads GSNGPSGSADSADS. A helical transmembrane segment spans residues 99–118; that stretch reads ALGVSAVVVGVTSIVGSFLF. F119 is a topological domain (cytoplasmic).

Expressed in mature pollen grains, developing microspores and tapetal cells.

It localises to the membrane. Required for pollen fertility and development. Active in both diploid tapetum and haploid microspores. Major pollen protein. In Brassica campestris (Field mustard), this protein is Anther-specific protein BCP1 (BCP1).